The sequence spans 298 residues: GTPase Era (298 aa).

Positions 3-170 (KSGFVAILGR…VQLLKDNLEE (168 aa)) constitute an Era-type G domain. Residues 11 to 18 (GRPNVGKS) form a G1 region. 11 to 18 (GRPNVGKS) contacts GTP. A G2 region spans residues 37–41 (QTTRN). The tract at residues 58 to 61 (DTPG) is G3. GTP is bound by residues 58 to 62 (DTPGI) and 120 to 123 (NKID). Positions 120–123 (NKID) are G4. The segment at 149–151 (ISA) is G5. The KH type-2 domain occupies 201–279 (TQQEVPHSVA…YLETWVKVKK (79 aa)).

Belongs to the TRAFAC class TrmE-Era-EngA-EngB-Septin-like GTPase superfamily. Era GTPase family. In terms of assembly, monomer.

It localises to the cytoplasm. It is found in the cell membrane. In terms of biological role, an essential GTPase that binds both GDP and GTP, with rapid nucleotide exchange. Plays a role in 16S rRNA processing and 30S ribosomal subunit biogenesis and possibly also in cell cycle regulation and energy metabolism. The chain is GTPase Era from Streptococcus equi subsp. zooepidemicus (strain MGCS10565).